A 311-amino-acid polypeptide reads, in one-letter code: HPr kinase/phosphorylase (311 aa).

Catalysis depends on residues His136 and Lys157. Residue 151 to 158 coordinates ATP; sequence GDSGIGKS. Residue Ser158 participates in Mg(2+) binding. Residue Asp175 is the Proton acceptor; for phosphorylation activity. Proton donor; for dephosphorylation activity of the active site. Positions 199–208 are important for the catalytic mechanism of both phosphorylation and dephosphorylation; that stretch reads LEIRGLGIIN. Glu200 is a binding site for Mg(2+). Arg241 is a catalytic residue. Residues 262–267 form an important for the catalytic mechanism of dephosphorylation region; the sequence is PVRPGR.

Belongs to the HPrK/P family. As to quaternary structure, homohexamer. Requires Mg(2+) as cofactor.

It catalyses the reaction [HPr protein]-L-serine + ATP = [HPr protein]-O-phospho-L-serine + ADP + H(+). The catalysed reaction is [HPr protein]-O-phospho-L-serine + phosphate + H(+) = [HPr protein]-L-serine + diphosphate. Its function is as follows. Catalyzes the ATP- as well as the pyrophosphate-dependent phosphorylation of a specific serine residue in HPr, a phosphocarrier protein of the phosphoenolpyruvate-dependent sugar phosphotransferase system (PTS). HprK/P also catalyzes the pyrophosphate-producing, inorganic phosphate-dependent dephosphorylation (phosphorolysis) of seryl-phosphorylated HPr (P-Ser-HPr). The two antagonistic activities of HprK/P are regulated by several intracellular metabolites, which change their concentration in response to the absence or presence of rapidly metabolisable carbon sources (glucose, fructose, etc.) in the growth medium. Therefore, by controlling the phosphorylation state of HPr, HPrK/P is a sensor enzyme that plays a major role in the regulation of carbon metabolism and sugar transport: it mediates carbon catabolite repression (CCR), and regulates PTS-catalyzed carbohydrate uptake and inducer exclusion. This is HPr kinase/phosphorylase from Staphylococcus haemolyticus (strain JCSC1435).